The following is a 163-amino-acid chain: Fatty acid-binding protein homolog (163 aa).

Positions 1–23 (MRCLVALILTVLIVTPEVEAKTL) are cleaved as a signal peptide.

This sequence belongs to the calycin superfamily. Fatty-acid binding protein (FABP) family. In terms of tissue distribution, abundant in the fluid surrounding the developing embryo of Ascaris suum.

May play a role in sequestering potentially toxic fatty acids and their peroxidation products, or it may be involved in the maintenance of the impermeable lipid layer of the eggshell. This is Fatty acid-binding protein homolog from Ascaris suum (Pig roundworm).